Reading from the N-terminus, the 466-residue chain is Ribulose bisphosphate carboxylase large chain (466 aa).

Lysine 5 is subject to N6,N6,N6-trimethyllysine. Substrate is bound by residues asparagine 114 and threonine 164. Lysine 166 acts as the Proton acceptor in catalysis. Residue lysine 168 coordinates substrate. Mg(2+) contacts are provided by lysine 192, aspartate 194, and glutamate 195. Position 192 is an N6-carboxylysine (lysine 192). Histidine 285 (proton acceptor) is an active-site residue. Substrate contacts are provided by arginine 286, histidine 318, and serine 370.

The protein belongs to the RuBisCO large chain family. Type I subfamily. As to quaternary structure, heterohexadecamer of 8 large chains and 8 small chains. Requires Mg(2+) as cofactor.

It localises to the plastid. The protein localises to the chloroplast. The enzyme catalyses 2 (2R)-3-phosphoglycerate + 2 H(+) = D-ribulose 1,5-bisphosphate + CO2 + H2O. It catalyses the reaction D-ribulose 1,5-bisphosphate + O2 = 2-phosphoglycolate + (2R)-3-phosphoglycerate + 2 H(+). Its function is as follows. RuBisCO catalyzes two reactions: the carboxylation of D-ribulose 1,5-bisphosphate, the primary event in carbon dioxide fixation, as well as the oxidative fragmentation of the pentose substrate in the photorespiration process. Both reactions occur simultaneously and in competition at the same active site. The polypeptide is Ribulose bisphosphate carboxylase large chain (Lobelia sp).